Reading from the N-terminus, the 393-residue chain is Probable acetyl-CoA acetyltransferase (393 aa).

Catalysis depends on cysteine 88, which acts as the Acyl-thioester intermediate. Residues histidine 349 and cysteine 379 each act as proton acceptor in the active site.

It belongs to the thiolase-like superfamily. Thiolase family.

It carries out the reaction 2 acetyl-CoA = acetoacetyl-CoA + CoA. This Mycobacterium leprae (strain TN) protein is Probable acetyl-CoA acetyltransferase (fadA4).